Here is a 324-residue protein sequence, read N- to C-terminus: MLNTLMTHLINPLAYIVPVLLAVAFLTLIERKVLGYMQLRKGPNVVGPYGLLQPIADGVKLFIKEPVRPSTSSPFLFLAAPVLALTLAMTLWAPMPMPHPVTDLNLGILFILALSSLAVYSILGSGWASNSKYALIGALRAVAQTISYEVSLGLILLSVIIFSGGYTLQTFNTTQESIWLLIPAWPLAAMWYISTLAETNRAPFDLTEGESELVSGFNVEYAGGPFALFFLAEYANILLMNTLSAVLFLGASHIPNMPELTTINLMTKAALLSILFLWVRASYPRFRYDQLMHLVWKNFLPLTLAFVLWHTALPIALAGLPPQL.

The next 8 helical transmembrane spans lie at 9 to 29, 75 to 95, 106 to 126, 146 to 166, 177 to 197, 228 to 248, 259 to 279, and 299 to 319; these read LINP…LTLI, FLFL…WAPM, LGIL…LGSG, ISYE…SGGY, SIWL…STLA, LFFL…AVLF, ELTT…FLWV, and FLPL…ALAG.

It belongs to the complex I subunit 1 family.

The protein localises to the mitochondrion inner membrane. The enzyme catalyses a ubiquinone + NADH + 5 H(+)(in) = a ubiquinol + NAD(+) + 4 H(+)(out). In terms of biological role, core subunit of the mitochondrial membrane respiratory chain NADH dehydrogenase (Complex I) that is believed to belong to the minimal assembly required for catalysis. Complex I functions in the transfer of electrons from NADH to the respiratory chain. The immediate electron acceptor for the enzyme is believed to be ubiquinone. The sequence is that of NADH-ubiquinone oxidoreductase chain 1 (MT-ND1) from Carassius auratus (Goldfish).